Reading from the N-terminus, the 374-residue chain is Putative 2,3-diketo-5-methylthiopentyl-1-phosphate enolase (374 aa).

Substrate is bound by residues lysine 138, 164–167 (QDDE), histidine 255, glycine 327, and 349–350 (GG). Mg(2+) is bound at residue aspartate 166.

It belongs to the RuBisCO large chain family. Type IV subfamily. Homodimer. Mg(2+) serves as cofactor.

The catalysed reaction is 5-methylsulfanyl-2,3-dioxopentyl phosphate = 2-hydroxy-5-methylsulfanyl-3-oxopent-1-enyl phosphate. It functions in the pathway amino-acid biosynthesis; L-methionine biosynthesis via salvage pathway; L-methionine from S-methyl-5-thio-alpha-D-ribose 1-phosphate: step 3/6. Its function is as follows. Catalyzes the enolization of 2,3-diketo-5-methylthiopentyl-1-phosphate (DK-MTP-1-P) into 2-hydroxy-3-keto-5-methylthiopentenyl-1-phosphate (HK-MTPenyl-1-P). This is Putative 2,3-diketo-5-methylthiopentyl-1-phosphate enolase (mtnW) from Shouchella clausii (strain KSM-K16) (Alkalihalobacillus clausii).